The sequence spans 232 residues: 5'-methylthioadenosine/S-adenosylhomocysteine nucleosidase (232 aa).

Glu12 (proton acceptor) is an active-site residue. Substrate-binding positions include Gly78, Ile152, and 173 to 174 (ME). Asp197 functions as the Proton donor in the catalytic mechanism.

This sequence belongs to the PNP/UDP phosphorylase family. MtnN subfamily. As to quaternary structure, homodimer.

It carries out the reaction S-adenosyl-L-homocysteine + H2O = S-(5-deoxy-D-ribos-5-yl)-L-homocysteine + adenine. The enzyme catalyses S-methyl-5'-thioadenosine + H2O = 5-(methylsulfanyl)-D-ribose + adenine. It catalyses the reaction 5'-deoxyadenosine + H2O = 5-deoxy-D-ribose + adenine. The protein operates within amino-acid biosynthesis; L-methionine biosynthesis via salvage pathway; S-methyl-5-thio-alpha-D-ribose 1-phosphate from S-methyl-5'-thioadenosine (hydrolase route): step 1/2. Catalyzes the irreversible cleavage of the glycosidic bond in both 5'-methylthioadenosine (MTA) and S-adenosylhomocysteine (SAH/AdoHcy) to adenine and the corresponding thioribose, 5'-methylthioribose and S-ribosylhomocysteine, respectively. Also cleaves 5'-deoxyadenosine, a toxic by-product of radical S-adenosylmethionine (SAM) enzymes, into 5-deoxyribose and adenine. Thus, is required for in vivo function of the radical SAM enzymes biotin synthase and lipoic acid synthase, that are inhibited by 5'-deoxyadenosine accumulation. The chain is 5'-methylthioadenosine/S-adenosylhomocysteine nucleosidase from Shigella boydii serotype 4 (strain Sb227).